Here is a 48-residue protein sequence, read N- to C-terminus: Disintegrin leucogastin-A (48 aa).

Positions 1–47 (DCASGPCCRDCKFLEEFTICNMARGDDMNDYCNGKTCDCPRNPHKWP) constitute a Disintegrin domain. 4 disulfide bridges follow: cysteine 2-cysteine 11, cysteine 7-cysteine 32, cysteine 8-cysteine 37, and cysteine 20-cysteine 39. A Cell attachment site motif is present at residues 24–26 (RGD).

It belongs to the venom metalloproteinase (M12B) family. P-II subfamily. P-IIa sub-subfamily. Monomer (disintegrin). In terms of tissue distribution, expressed by the venom gland.

It is found in the secreted. In terms of biological role, inhibits ADP-induced human platelet aggregation. The chain is Disintegrin leucogastin-A from Echis leucogaster (Roman's saw-scaled viper).